The primary structure comprises 133 residues: Small ribosomal subunit protein uS8 (133 aa).

Belongs to the universal ribosomal protein uS8 family. In terms of assembly, part of the 30S ribosomal subunit. Contacts proteins S5 and S12.

Functionally, one of the primary rRNA binding proteins, it binds directly to 16S rRNA central domain where it helps coordinate assembly of the platform of the 30S subunit. This chain is Small ribosomal subunit protein uS8, found in Salinibacter ruber (strain DSM 13855 / M31).